The primary structure comprises 678 residues: Zinc finger translocation-associated protein (678 aa).

Disordered regions lie at residues 1–100, 174–250, 333–413, and 493–583; these read MEPG…PGRD, GAGG…GSRG, LSEL…RDHR, and PESP…NYQP. Residues 66–78 are compositionally biased toward low complexity; it reads PSSRARGPASSGR. Residues 79 to 88 are compositionally biased toward basic and acidic residues; sequence KYSDHCEARA. Residues 187-200 are compositionally biased toward acidic residues; that stretch reads AEEEEEEDEEEEEG. Positions 205–214 are enriched in low complexity; sequence ACPPKGSGKA. Residue Lys375 forms a Glycyl lysine isopeptide (Lys-Gly) (interchain with G-Cter in SUMO2) linkage. Residues 493-509 show a composition bias toward low complexity; the sequence is PESPSVPVAPSTASASE. 2 stretches are compositionally biased toward acidic residues: residues 512 to 524 and 539 to 549; these read GGAE…EEWW and AEEEDDEDDSQ. The segment covering 557–572 has biased composition (pro residues); the sequence is PPLPLPPPPPPPPPPP. Residues 573 to 583 show a composition bias toward basic and acidic residues; it reads RSREQRRNYQP.

The polypeptide is Zinc finger translocation-associated protein (Mus musculus (Mouse)).